The chain runs to 366 residues: Flagellar P-ring protein (366 aa).

An N-terminal signal peptide occupies residues 1-22; sequence MFTRKSVILMAVLLIWSAVSYA.

Belongs to the FlgI family. As to quaternary structure, the basal body constitutes a major portion of the flagellar organelle and consists of four rings (L,P,S, and M) mounted on a central rod.

The protein localises to the periplasm. It is found in the bacterial flagellum basal body. In terms of biological role, assembles around the rod to form the L-ring and probably protects the motor/basal body from shearing forces during rotation. The chain is Flagellar P-ring protein from Hydrogenovibrio crunogenus (strain DSM 25203 / XCL-2) (Thiomicrospira crunogena).